The sequence spans 508 residues: Photosystem II CP47 reaction center protein (508 aa).

A run of 6 helical transmembrane segments spans residues 21–36 (SVHI…WAGS), 101–115 (IVFS…IWHW), 140–156 (GIHL…FGAF), 203–218 (IAAG…FHLS), 237–252 (VLSS…AFVV), and 457–472 (SFAL…HGSR).

This sequence belongs to the PsbB/PsbC family. PsbB subfamily. As to quaternary structure, PSII is composed of 1 copy each of membrane proteins PsbA, PsbB, PsbC, PsbD, PsbE, PsbF, PsbH, PsbI, PsbJ, PsbK, PsbL, PsbM, PsbT, PsbX, PsbY, PsbZ, Psb30/Ycf12, at least 3 peripheral proteins of the oxygen-evolving complex and a large number of cofactors. It forms dimeric complexes. It depends on Binds multiple chlorophylls. PSII binds additional chlorophylls, carotenoids and specific lipids. as a cofactor.

Its subcellular location is the plastid. It localises to the chloroplast thylakoid membrane. In terms of biological role, one of the components of the core complex of photosystem II (PSII). It binds chlorophyll and helps catalyze the primary light-induced photochemical processes of PSII. PSII is a light-driven water:plastoquinone oxidoreductase, using light energy to abstract electrons from H(2)O, generating O(2) and a proton gradient subsequently used for ATP formation. The chain is Photosystem II CP47 reaction center protein from Lobularia maritima (Sweet alyssum).